Reading from the N-terminus, the 179-residue chain is Apoptosis regulator Bcl-2 homolog (179 aa).

A BH1 motif is present at residues 76 to 95 (ELFKDLINWGRICGFIVFSA). Positions 126–141 (PWMISHGGQEEFLAFS) match the BH2 motif.

Belongs to the Bcl-2 family. Interacts with host BECN1 (via BH3 homology domain); this interaction allows the virus to inhibit BECN1, and thus autophagy. Interacts with host BID. Interacts with host BAX.

It is found in the host mitochondrion. The protein localises to the host endoplasmic reticulum. Its function is as follows. Suppresses apoptosis in host cell to promote the viral replication. Has the ability to potentially bind to all the members of the proapoptotic Bcl-2 family. Inhibits autophagy by interacting with host Beclin 1 (BECN1). This is Apoptosis regulator Bcl-2 homolog from African swine fever virus (isolate Pig/Kenya/KEN-50/1950) (ASFV).